The sequence spans 506 residues: MNESNCTKIVNFLKGMRLKTNPNLPGAKQKTPLNIHRFYLLLIIIIYTATSACIYFDWTSIRNLLLNVGKYEHLNISKYADITLSPQYKKINNLYPMTLAIHFTMSVFCGFLYDHIGPKFTAIIGQGFNILSWIFLSIDTTKIDTTLIGFIFLGLGADTAFIPILTVSNLFPDISTFIMTVIGAAASLSYAVPATLNFVYKKYPHFPFYYICYGYIFIILIPCLLVATFLLPMKPFKGLDYYLENDQESDSKNKEQISYTDNDVEMQPSLIQNGNTNVSNNVNKNKATKNIIEGENFHKQSILLFFKVLLSYPSICIIVYFILFNISTVFYGMVTDIYFSYNKSIINIINILMPISFIPCIIFGRFINKYGAAIIIIIMNAFSALMHLTALIKHQAAGLISAFLYMCAASIYTSQIYCFLLNAFPSVVFGKLLGITSLFGGMFSLFCEKLYDNISNSSGNKNDPTTISILLAISFIIMFLPLSILYTRNYEKNIESVNSEKNQIQA.

2 N-linked (GlcNAc...) asparagine glycosylation sites follow: Asn2 and Asn5. The chain crosses the membrane as a helical span at residues 38 to 58 (FYLLLIIIIYTATSACIYFDW). Asn75 carries an N-linked (GlcNAc...) asparagine glycan. The next 5 membrane-spanning stretches (helical) occupy residues 93–113 (NLYP…GFLY), 116–136 (IGPK…WIFL), 147–167 (LIGF…ILTV), 174–194 (ISTF…AVPA), and 211–231 (ICYG…TFLL). N-linked (GlcNAc...) asparagine glycosylation is present at Asn277. Residues 302 to 322 (ILLFFKVLLSYPSICIIVYFI) traverse the membrane as a helical segment. N-linked (GlcNAc...) asparagine glycosylation is found at Asn325 and Asn342. The next 4 helical transmembrane spans lie at 344 to 364 (SIIN…IIFG), 372 to 392 (AAII…TALI), 399 to 419 (LISA…IYCF), and 427 to 447 (VVFG…SLFC). 2 N-linked (GlcNAc...) asparagine glycosylation sites follow: Asn453 and Asn456. Residues 466–486 (TISILLAISFIIMFLPLSILY) traverse the membrane as a helical segment.

Belongs to the SLC43A transporter (TC 2.A.1.44) family.

The protein resides in the cell membrane. Cationic amino acid transporter which transports L-arginine, L-lysine and, to a lesser extent, L-histidine and ornithine. Plays an essential role in gametogenesis. This is Cationic amino acid transporter 8 from Plasmodium berghei (strain Anka).